Here is a 276-residue protein sequence, read N- to C-terminus: MTTKELFDRICRKRSFLCVGLDTDVKKIPPHLLNEDDPILAFNKAIIDATAEYCVAFKPNMAFYESMGSFGAHSFEKTIEYIRERYPDQFIIADAKRGDIGNTSDMYARSFFEHLKVDALTVSPYMGEDSISPFLSYAGKFTVLLALTSNKGSQDFQMMRDADGEYLFERVIRISQTWDNAGQLMYVVGATQASMLKDIREIVPDAFLLVPGVGAQGGSLEDVAEYGMNAHCGLLVNASRSIIYADNTEGFAAKAAGEAAAMQRQMEIALRAKALI.

Lys96 functions as the Proton donor in the catalytic mechanism.

This sequence belongs to the OMP decarboxylase family. Type 2 subfamily.

The enzyme catalyses orotidine 5'-phosphate + H(+) = UMP + CO2. Its pathway is pyrimidine metabolism; UMP biosynthesis via de novo pathway; UMP from orotate: step 2/2. The protein is Orotidine 5'-phosphate decarboxylase of Porphyromonas gingivalis (strain ATCC BAA-308 / W83).